The primary structure comprises 1452 residues: GTPase-activating protein and VPS9 domain-containing protein 1 (1452 aa).

In terms of domain architecture, Ras-GAP spans Ser147–Gly385. Composition is skewed to polar residues over residues Val445 to Thr468 and Pro577 to Asn587. Disordered stretches follow at residues Val445–Ala471, Ser571–Gly611, Leu735–Thr816, Arg885–Gly912, Ala929–Arg974, and Pro1037–Asp1063. The segment covering Ser588–Glu601 has biased composition (low complexity). Over residues Ser755–Asp774 the composition is skewed to polar residues. Basic and acidic residues-rich tracts occupy residues Ile775–Cys786 and Arg885–Ser897. 2 stretches are compositionally biased toward low complexity: residues Ser898–Pro911 and Pro936–Lys946. The span at Asp947–Lys968 shows a compositional bias: basic and acidic residues. One can recognise a VPS9 domain in the interval Ile1312–Lys1452.

It belongs to the GAPVD1 family.

It localises to the membrane. The protein resides in the endosome. In terms of biological role, acts both as a GTPase-activating protein (GAP) and a guanine nucleotide exchange factor (GEF), and participates in various processes such as endocytosis, insulin receptor internalization or LC2A4/GLUT4 trafficking. The chain is GTPase-activating protein and VPS9 domain-containing protein 1 (gapvd1) from Xenopus laevis (African clawed frog).